Here is a 295-residue protein sequence, read N- to C-terminus: Ankyrin repeat and SOCS box protein 17 (295 aa).

Residues 146 to 176 form an ANK repeat; that stretch reads SGITPLLYVAQTRQSNILKILLQYGILEREK. Residues 243 to 295 enclose the SOCS box domain; the sequence is DYIPPTRYKDPCELVHLCRITIRTQLLANNMLPNGIFSLLIPTRLQNFLNLES.

It belongs to the ankyrin SOCS box (ASB) family. In terms of tissue distribution, specifically expressed in testis. Localizes to spermatogenic cells in testis, with highest expression in round spermatids and condensing spermatids and lower expression in pachytene spermatocytes.

It functions in the pathway protein modification; protein ubiquitination. May be a substrate-recognition component of a SCF-like ECS (Elongin-Cullin-SOCS-box protein) E3 ubiquitin-protein ligase complex which mediates the ubiquitination and subsequent proteasomal degradation of target proteins. This is Ankyrin repeat and SOCS box protein 17 (Asb17) from Mus musculus (Mouse).